The primary structure comprises 170 residues: METDKYVFFHGANKNQAGVHIFSQWFPVNFKEYLNGEEFAEYVSAEQYMMAHKALLFGDMFHFKKIMECSKQCKIKYLGRRVRNFNPTIWDKHKFDIVTEGNRLKFSQNPDLMKRLLETGNKTIVEASPSDKIWGIGLTAQQAVNIPENKWPGKNLLGKVLMKIREENQQ.

This sequence belongs to the YbiA family.

The catalysed reaction is 2,5-diamino-6-hydroxy-4-(5-phosphoribosylamino)-pyrimidine + H2O = 2,5,6-triamino-4-hydroxypyrimidine + D-ribose 5-phosphate. It carries out the reaction 5-amino-6-(5-phospho-D-ribosylamino)uracil + H2O = 5,6-diaminouracil + D-ribose 5-phosphate. In terms of biological role, catalyzes the hydrolysis of the N-glycosidic bond in the first two intermediates of riboflavin biosynthesis, which are highly reactive metabolites, yielding relatively innocuous products. Thus, can divert a surplus of harmful intermediates into relatively harmless products and pre-empt the damage these intermediates would otherwise do. May act on other substrates in vivo. The polypeptide is N-glycosidase R617 (Acanthamoeba polyphaga mimivirus (APMV)).